The following is a 249-amino-acid chain: Uridylate kinase (249 aa).

22-25 (KISG) is an ATP binding site. An involved in allosteric activation by GTP region spans residues 30-35 (GTQGFG). A UMP-binding site is contributed by glycine 64. Glycine 65 and arginine 69 together coordinate ATP. Residues aspartate 84 and 145-152 (TGNPYFTT) contribute to the UMP site. The ATP site is built by asparagine 173, tyrosine 179, and aspartate 182.

It belongs to the UMP kinase family. In terms of assembly, homohexamer.

It is found in the cytoplasm. It carries out the reaction UMP + ATP = UDP + ADP. It participates in pyrimidine metabolism; CTP biosynthesis via de novo pathway; UDP from UMP (UMPK route): step 1/1. With respect to regulation, allosterically activated by GTP. Inhibited by UTP. Functionally, catalyzes the reversible phosphorylation of UMP to UDP. The protein is Uridylate kinase of Ruegeria sp. (strain TM1040) (Silicibacter sp.).